A 911-amino-acid chain; its full sequence is Protein translocase subunit SecA (911 aa).

Residues Q87, 105–109, and D510 contribute to the ATP site; that span reads GEGKT. The Zn(2+) site is built by C896, C898, C907, and H908.

It belongs to the SecA family. In terms of assembly, monomer and homodimer. Part of the essential Sec protein translocation apparatus which comprises SecA, SecYEG and auxiliary proteins SecDF-YajC and YidC. The cofactor is Zn(2+).

The protein resides in the cell inner membrane. It localises to the cytoplasm. The enzyme catalyses ATP + H2O + cellular proteinSide 1 = ADP + phosphate + cellular proteinSide 2.. In terms of biological role, part of the Sec protein translocase complex. Interacts with the SecYEG preprotein conducting channel. Has a central role in coupling the hydrolysis of ATP to the transfer of proteins into and across the cell membrane, serving both as a receptor for the preprotein-SecB complex and as an ATP-driven molecular motor driving the stepwise translocation of polypeptide chains across the membrane. The chain is Protein translocase subunit SecA from Acinetobacter baumannii (strain SDF).